Reading from the N-terminus, the 291-residue chain is MLRREARLRREYLYRKAREEAQRSVQEKKERVKRALEENQLIPTELRREALALQGSLEFDDAGGEGVTSHVDDEYRWAGVEDPKVMITTSRDPSSRLKMFAKELKLVFPGAQRMNRGRHEVGALVRACKANGVTDLLVVHEHRGTPVGLIVSHLPFGPTAYFTLCNVVMRHDIPDLGTMSEAKPHLITHGFSSRLGKRVSDILRYLFPVPKDDSHRVITFANQDDYISFRHHVYKKTDHRNVELTEVGPRFELKLYMIRLGTLEQEATADVEWRWHPYTNTARKRVFLSAE.

The Brix domain occupies 83-264 (PKVMITTSRD…LYMIRLGTLE (182 aa)).

As to quaternary structure, part of the small subunit (SSU) processome, composed of more than 70 proteins and the RNA chaperone small nucleolar RNA (snoRNA) U3. Component of a heterotrimeric complex containing IMP3, IMP4 and MPHOSPH10. Interacts with MPHOSPH10.

The protein localises to the nucleus. Its subcellular location is the nucleolus. In terms of biological role, component of the 60-80S U3 small nucleolar ribonucleoprotein (U3 snoRNP). Required for the early cleavages during pre-18S ribosomal RNA processing. Part of the small subunit (SSU) processome, first precursor of the small eukaryotic ribosomal subunit. During the assembly of the SSU processome in the nucleolus, many ribosome biogenesis factors, an RNA chaperone and ribosomal proteins associate with the nascent pre-rRNA and work in concert to generate RNA folding, modifications, rearrangements and cleavage as well as targeted degradation of pre-ribosomal RNA by the RNA exosome. In Mus musculus (Mouse), this protein is U3 small nucleolar ribonucleoprotein protein IMP4 (Imp4).